A 267-amino-acid polypeptide reads, in one-letter code: Cell division protein FtsQ (267 aa).

Residues 1-32 are Cytoplasmic-facing; the sequence is MRKKTSSNKKKQTKKTNNISLRRKLGLMYKKA. A helical transmembrane segment spans residues 33-53; sequence ILGLKIALIIFVCLFVFTKYF. At 54 to 267 the chain is on the periplasmic side; sequence AGIKTYLTTN…DKNKYYIEKY (214 aa). One can recognise a POTRA domain in the interval 73-141; that stretch reads FKLENVIIEG…NTVYIKLFER (69 aa).

It belongs to the FtsQ/DivIB family. FtsQ subfamily.

The protein resides in the cell inner membrane. In terms of biological role, essential cell division protein. This chain is Cell division protein FtsQ, found in Rickettsia conorii (strain ATCC VR-613 / Malish 7).